We begin with the raw amino-acid sequence, 566 residues long: Putative pentatricopeptide repeat-containing protein At1g28020 (566 aa).

9 PPR repeats span residues 136–171, 172–206, 207–242, 243–273, 279–309, 314–348, 349–385, 468–504, and 505–540; these read GDSVYTSLLNSYARSDKTLCKAEATFQKMRDLGLLL, RPVPYNAMMSLYSALKNREKVEELLLEMKDNDVEA, DNVTVNNVLKLYSAVCDVTEMEKFLNKWEGIHGIKL, EWHTTLDMAKAYLRARSSGKAMKMLRLTEQL, LKSAYDHLMKLYGEAGNREEVLRVWKLYKSK, DNNGYRTVIRSLLKVDDIVGAEEIYKVWESLPLEF, DHRIPTMLASGYRDRGMTEKAEKLMNSKTIKDRRMNK, DYSVYVALLSSYAKSDKNLGNMVDEILREMEENNVDP, and DLITVNHVLKVYAAESKIQAMEMFMRRWGTEDGIKL.

This sequence belongs to the PPR family. P subfamily.

This chain is Putative pentatricopeptide repeat-containing protein At1g28020, found in Arabidopsis thaliana (Mouse-ear cress).